We begin with the raw amino-acid sequence, 510 residues long: Maturase K (510 aa).

Belongs to the intron maturase 2 family. MatK subfamily.

It is found in the plastid. Its subcellular location is the chloroplast. Its function is as follows. Usually encoded in the trnK tRNA gene intron. Probably assists in splicing its own and other chloroplast group II introns. In Thuja plicata (Western red-cedar), this protein is Maturase K.